The primary structure comprises 393 residues: Proteasome-activating nucleotidase (393 aa).

Residues 15 to 53 (DEVQLVRLLEEKIKSLQIEIENLRKELNYYKAEMEKMLS) are a coiled coil. Residues 178 to 183 (GTGKTM) and Tyr-317 contribute to the ATP site. A coiled-coil region spans residues 365–393 (MNDLVEAINKINVKRNKMESMKERREKYS). The segment at 391–393 (KYS) is docks into pockets in the proteasome alpha-ring to cause gate opening.

Belongs to the AAA ATPase family. In terms of assembly, homohexamer. The hexameric complex has a two-ring architecture resembling a top hat that caps the 20S proteasome core at one or both ends. Upon ATP-binding, the C-terminus of PAN interacts with the alpha-rings of the proteasome core by binding to the intersubunit pockets.

It is found in the cytoplasm. In terms of biological role, ATPase which is responsible for recognizing, binding, unfolding and translocation of substrate proteins into the archaeal 20S proteasome core particle. Is essential for opening the gate of the 20S proteasome via an interaction with its C-terminus, thereby allowing substrate entry and access to the site of proteolysis. Thus, the C-termini of the proteasomal ATPase function like a 'key in a lock' to induce gate opening and therefore regulate proteolysis. Unfolding activity requires energy from ATP hydrolysis, whereas ATP binding alone promotes ATPase-20S proteasome association which triggers gate opening, and supports translocation of unfolded substrates. This Saccharolobus solfataricus (strain ATCC 35092 / DSM 1617 / JCM 11322 / P2) (Sulfolobus solfataricus) protein is Proteasome-activating nucleotidase.